A 180-amino-acid polypeptide reads, in one-letter code: Large ribosomal subunit protein uL6 (180 aa).

It belongs to the universal ribosomal protein uL6 family. In terms of assembly, part of the 50S ribosomal subunit.

This protein binds to the 23S rRNA, and is important in its secondary structure. It is located near the subunit interface in the base of the L7/L12 stalk, and near the tRNA binding site of the peptidyltransferase center. In Caldanaerobacter subterraneus subsp. tengcongensis (strain DSM 15242 / JCM 11007 / NBRC 100824 / MB4) (Thermoanaerobacter tengcongensis), this protein is Large ribosomal subunit protein uL6.